Reading from the N-terminus, the 628-residue chain is Eukaryotic peptide chain release factor GTP-binding subunit ERF3B (628 aa).

The segment covering 1-10 (MDSGSSSSDS) has biased composition (low complexity). 3 disordered regions span residues 1–44 (MDSG…REPL), 71–124 (SFLR…LEGS), and 146–191 (LEES…KSKS). One can recognise a tr-type G domain in the interval 201–425 (KEHVNVVFIG…YLDNLPNFNR (225 aa)). Residues 210–217 (GHVDAGKS) are G1. 213-218 (DAGKST) contributes to the GTP binding site. The interval 266–270 (GKTVE) is G2. The interval 287–290 (DAPG) is G3. GTP contacts are provided by residues 349–352 (NKMD) and 391–393 (SGL). The tract at residues 349-352 (NKMD) is G4. The interval 391 to 393 (SGL) is G5.

The protein belongs to the TRAFAC class translation factor GTPase superfamily. Classic translation factor GTPase family. ERF3 subfamily. As to quaternary structure, component of the eRF1-eRF3-GTP ternary complex, composed of ETF1/ERF1 and ERF3 (GSPT1/ERF3A or GSPT2/ERF3B) and GTP. Component of the transient SURF (SMG1-UPF1-eRF1-eRF3) complex. Interacts with UPF1 and PABPC1.

It is found in the cytoplasm. It carries out the reaction GTP + H2O = GDP + phosphate + H(+). In terms of biological role, GTPase component of the eRF1-eRF3-GTP ternary complex, a ternary complex that mediates translation termination in response to the termination codons UAA, UAG and UGA. GSPT2/ERF3B mediates ETF1/ERF1 delivery to stop codons: The eRF1-eRF3-GTP complex binds to a stop codon in the ribosomal A-site. GTP hydrolysis by GSPT2/ERF3B induces a conformational change that leads to its dissociation, permitting ETF1/ERF1 to accommodate fully in the A-site. Component of the transient SURF complex which recruits UPF1 to stalled ribosomes in the context of nonsense-mediated decay (NMD) of mRNAs containing premature stop codons. This Pongo abelii (Sumatran orangutan) protein is Eukaryotic peptide chain release factor GTP-binding subunit ERF3B (GSPT2).